The chain runs to 1481 residues: MQRSPLEKASVLSKLFFSWTRPILRKGYRQRLELSDIYQIPSADSADNLSEKLEREWDRELASKKNPKLINALRRCFFWRFMFYGILLYLGEVTKAVQPLLLGRIIASYDPDNKVERSIAIYLGIGLCLLFIVRMLLLHPAIFGLHHIGMQMRIAMFSLIYKKILKLSSRVLDKISIGQLVSLLSNNLNKFDEGLALAHFVWIAPLQVMLLMGLLWELLQASAFCGLGFLIVLALFQSGLGRMMMKYRDQRAGKINERLVITSEMIENIQSVKAYCWEEAMEKMIENLRQTELKLTRKAAYVRYFNSSAFFFSGFFVVFLSVLPYALIKGIILRKIFTTISFCIVLRMAVTRQFPWAVQTWYDSLGAINKIQDFLQKQEYKTLEYNLTTTEVVMENVTAFWEEGFGELFEKAKQNSDNRKISNGDNSLFFSNLALLGTPVLKDISFKIERGQLLAVAGSTGAGKTSLLMMIMGELEPSEGKIKHSGRISFCSQFSWIMPGTIKENIIFGVSYDEYRYRSVIKACQLEEDIAKFAEKDNIVLGEGGITLSGGQRARISLARAVYKDADLYLLDSPFGYLDVLTEKEIFESCVCKLMANKTRILVTSKMEHLKKADKILILHEGSSYFYGTFSELQNLRPDFSSKLMGYDSFDQFSAERRNSILTETLRRFSLEGDAAVSWNETKKQSFKQTGEIGEKRKNSILNSINSLRKFSVVQKTPLQMSGIEEDPDEPSERRLSLVPDSEQGEAILPRSNVINTGPTFQGRRRQSVLNLMTHSVNQGQNIHRINAASTRKMSIAPPANLTEMDIYSRRLSQESSLEISEEINEEDLKECFFDDAENIPAVTTWNTYLRYITVHKSLIFVLIWCLVIFLAEVAVSLVLLWLLGNAPAYNKGNSTISANSSYAVIITSTSAYYVFYIYVGVADTLLALGFFRGLPLVHTLITVSKILHHKMLHSVLQAPMSTLNALKAGGILNRFSKDIAILDDLLPLTIFDFIQLLLIVIGAVAVVSVLQPYIFLATVPVIVTFIILRAYFLHTSQQLKQLESEGRSPIFTHLVTSLKGLWTLRAFGRQPYFETLFHKALNLHTANWFLYLSTLRWFQMRIEMVFVIFFIVVTFISILTTGEGEGQVGIILTLAMNIMGTLQWAVNSSIDVDSLMRSVSRVFKFIDMPTEEGKSTRSIKPSKDCHLSKVMVFENPHVKKDDIWPSGGQMTVKDLTARYLDGGNAILENISFSISPGQRVGLLGRTGSGKSTLLSAFLRLLNTEGEIQIDGVSWDSITLQQWRKAFGVIPQKVFIFSGTFRKNLDPYEQWSDQEIWKVADEVGLRSVIEQFPGKLDFVLVDGGYVLSHGHKQLMCLARSVLSKAKILLLDEPSAHLDPITYQIIRRTLKQAFADCTVILCEHRIEAMLECQRFLVIEENNVRQYDSIQKLLSEKSLFRQAISPSDRMKLFPRRNSSKHKSRPPITALKEETEEEVQDTRL.

Topologically, residues 1 to 77 (MQRSPLEKAS…KLINALRRCF (77 aa)) are cytoplasmic. The helical transmembrane segment at 78–98 (FWRFMFYGILLYLGEVTKAVQ) threads the bilayer. The 285-residue stretch at 81–365 (FMFYGILLYL…WAVQTWYDSL (285 aa)) folds into the ABC transmembrane type-1 1 domain. The Extracellular segment spans residues 99 to 122 (PLLLGRIIASYDPDNKVERSIAIY). A helical transmembrane segment spans residues 123 to 146 (LGIGLCLLFIVRMLLLHPAIFGLH). Residues 147–195 (HIGMQMRIAMFSLIYKKILKLSSRVLDKISIGQLVSLLSNNLNKFDEGL) are Cytoplasmic-facing. The helical transmembrane segment at 196–216 (ALAHFVWIAPLQVMLLMGLLW) threads the bilayer. Topologically, residues 217 to 222 (ELLQAS) are extracellular. Residues 223–243 (AFCGLGFLIVLALFQSGLGRM) traverse the membrane as a helical segment. Residues 244–298 (MMKYRDQRAGKINERLVITSEMIENIQSVKAYCWEEAMEKMIENLRQTELKLTRK) lie on the Cytoplasmic side of the membrane. The chain crosses the membrane as a helical span at residues 299–319 (AAYVRYFNSSAFFFSGFFVVF). At 320–339 (LSVLPYALIKGIILRKIFTT) the chain is on the extracellular side. The chain crosses the membrane as a helical span at residues 340–358 (ISFCIVLRMAVTRQFPWAV). Topologically, residues 359 to 858 (QTWYDSLGAI…YLRYITVHKS (500 aa)) are cytoplasmic. ATP-binding positions include Trp-401, 458-465 (GSTGAGKT), and Gln-493. In terms of domain architecture, ABC transporter 1 spans 423–646 (NGDNSLFFSN…RPDFSSKLMG (224 aa)). A lipid anchor (S-palmitoyl cysteine) is attached at Cys-524. Phosphoserine is present on residues Ser-549 and Ser-660. Residues 654–831 (SAERRNSILT…EEINEEDLKE (178 aa)) are disordered R region. Ser-670 carries the phosphoserine; by PKA modification. Ser-686 bears the Phosphoserine mark. Residue Lys-688 forms a Glycyl lysine isopeptide (Lys-Gly) (interchain with G-Cter in ubiquitin) linkage. Ser-700 and Ser-712 each carry phosphoserine. Thr-717 is modified (phosphothreonine). Ser-737, Ser-768, Ser-790, Ser-795, and Ser-813 each carry phosphoserine. The helical transmembrane segment at 859-879 (LIFVLIWCLVIFLAEVAVSLV) threads the bilayer. Residues 859-1155 (LIFVLIWCLV…AVNSSIDVDS (297 aa)) enclose the ABC transmembrane type-1 2 domain. At 880–918 (LLWLLGNAPAYNKGNSTISANSSYAVIITSTSAYYVFYI) the chain is on the extracellular side. N-linked (GlcNAc...) asparagine glycosylation is found at Asn-894 and Asn-900. The discontinuously helical transmembrane segment at 919 to 939 (YVGVADTLLALGFFRGLPLVH) threads the bilayer. Residues 940–990 (TLITVSKILHHKMLHSVLQAPMSTLNALKAGGILNRFSKDIAILDDLLPLT) are Cytoplasmic-facing. A helical membrane pass occupies residues 991-1011 (IFDFIQLLLIVIGAVAVVSVL). Over 1012 to 1013 (QP) the chain is Extracellular. Residues 1014–1034 (YIFLATVPVIVTFIILRAYFL) traverse the membrane as a helical segment. Topologically, residues 1035-1095 (HTSQQLKQLE…TANWFLYLST (61 aa)) are cytoplasmic. The chain crosses the membrane as a helical span at residues 1096–1116 (LRWFQMRIEMVFVIFFIVVTF). Residues 1117–1130 (ISILTTGEGEGQVG) are Extracellular-facing. The chain crosses the membrane as a helical span at residues 1131–1151 (IILTLAMNIMGTLQWAVNSSI). Topologically, residues 1152–1481 (DVDSLMRSVS…TEEEVQDTRL (330 aa)) are cytoplasmic. Residues 1211–1444 (MTVKDLTARY…KSLFRQAISP (234 aa)) form the ABC transporter 2 domain. Residues Tyr-1220 and 1245-1252 (GRTGSGKS) each bind ATP. The interaction with GORASP2 stretch occupies residues 1387–1481 (RTLKQAFADC…TEEEVQDTRL (95 aa)). Cys-1396 carries S-palmitoyl cysteine lipidation. Phosphoserine occurs at positions 1445 and 1457. The interval 1449-1481 (KLFPRRNSSKHKSRPPITALKEETEEEVQDTRL) is disordered. The segment covering 1450-1462 (LFPRRNSSKHKSR) has biased composition (basic residues). Over residues 1471–1481 (ETEEEVQDTRL) the composition is skewed to acidic residues. The short motif at 1479-1481 (TRL) is the PDZ-binding element.

This sequence belongs to the ABC transporter superfamily. ABCC family. CFTR transporter (TC 3.A.1.202) subfamily. As to quaternary structure, monomer; does not require oligomerization for channel activity. May form oligomers in the membrane. Interacts with SLC26A3, SLC26A6 and NHERF1. Interacts with SHANK2. Interacts with MYO6. Interacts (via C-terminus) with GOPC (via PDZ domain); this promotes CFTR internalization and thereby decreases channel activity. Interacts with SLC4A7 through NHERF1. Found in a complex with MYO5B and RAB11A. Interacts with ANO1. Interacts with SLC26A8. Interacts with AHCYL1; the interaction increases CFTR activity. Interacts with CSE1L. The core-glycosylated form interacts with GORASP2 (via PDZ GRASP-type 1 domain) in respone to ER stress. Interacts with MARCHF2; the interaction leads to CFTR ubiqtuitination and degradation. Interacts with ADGRG2. In terms of processing, N-glycosylated. Post-translationally, phosphorylated; cAMP treatment promotes phosphorylation and activates the channel. Dephosphorylation decreases the ATPase activity (in vitro). Phosphorylation at PKA sites activates the channel. Phosphorylation at PKC sites enhances the response to phosphorylation by PKA. Phosphorylated by AMPK; this inhibits channel activity. Ubiquitinated, leading to its degradation in the lysosome. Deubiquitination by USP10 in early endosomes enhances its endocytic recycling to the cell membrane. Ubiquitinated by RNF185 during ER stress. Ubiquitinated by MARCHF2.

It localises to the apical cell membrane. It is found in the early endosome membrane. Its subcellular location is the cell membrane. The protein resides in the recycling endosome membrane. The protein localises to the endoplasmic reticulum membrane. It localises to the nucleus. It carries out the reaction ATP + H2O + closed Cl(-) channel = ADP + phosphate + open Cl(-) channel.. The enzyme catalyses chloride(in) = chloride(out). It catalyses the reaction hydrogencarbonate(in) = hydrogencarbonate(out). The catalysed reaction is ATP + H2O = ADP + phosphate + H(+). Its function is as follows. Epithelial ion channel that plays an important role in the regulation of epithelial ion and water transport and fluid homeostasis. Mediates the transport of chloride ions across the cell membrane. Possesses an intrinsic ATPase activity and utilizes ATP to gate its channel; the passive flow of anions through the channel is gated by cycles of ATP binding and hydrolysis by the ATP-binding domains. The ion channel is also permeable to HCO(3)(-); selectivity depends on the extracellular chloride concentration. Exerts its function also by modulating the activity of other ion channels and transporters. Contributes to the regulation of the pH and the ion content of the epithelial fluid layer. Modulates the activity of the epithelial sodium channel (ENaC) complex, in part by regulating the cell surface expression of the ENaC complex. May regulate bicarbonate secretion and salvage in epithelial cells by regulating the transporter SLC4A7. Can inhibit the chloride channel activity of ANO1. Plays a role in the chloride and bicarbonate homeostasis during sperm epididymal maturation and capacitation. The sequence is that of Cystic fibrosis transmembrane conductance regulator from Microcebus murinus (Gray mouse lemur).